A 323-amino-acid polypeptide reads, in one-letter code: Glyoxylate/hydroxypyruvate reductase B (323 aa).

Residues Arg237 and Glu266 contribute to the active site. His285 acts as the Proton donor in catalysis.

Belongs to the D-isomer specific 2-hydroxyacid dehydrogenase family. GhrB subfamily. Homodimer.

It is found in the cytoplasm. It carries out the reaction glycolate + NADP(+) = glyoxylate + NADPH + H(+). It catalyses the reaction (R)-glycerate + NAD(+) = 3-hydroxypyruvate + NADH + H(+). The catalysed reaction is (R)-glycerate + NADP(+) = 3-hydroxypyruvate + NADPH + H(+). Catalyzes the NADPH-dependent reduction of glyoxylate and hydroxypyruvate into glycolate and glycerate, respectively. In Klebsiella pneumoniae subsp. pneumoniae (strain ATCC 700721 / MGH 78578), this protein is Glyoxylate/hydroxypyruvate reductase B.